A 318-amino-acid polypeptide reads, in one-letter code: NAC domain-containing protein 68 (318 aa).

Residues 21–175 (LPPGFRFHPT…EWVLCRLYNK (155 aa)) enclose the NAC domain.

In terms of tissue distribution, expressed in stems, leaf blades and callus. Weakly expressed in developing flowers.

It is found in the nucleus. Probable transcription factor involved in stress response. The chain is NAC domain-containing protein 68 from Oryza sativa subsp. japonica (Rice).